Here is a 181-residue protein sequence, read N- to C-terminus: Inner membrane-spanning protein YciB (181 aa).

5 helical membrane-spanning segments follow: residues 10-30 (LIIFFAVYKFFDIYIASGALI), 50-70 (MHLITFAMVTVFGTLTLVFHD), 72-92 (AFIKWKVTIIYALFALALGVS), 118-138 (VTWYWVSFFAICGLVNIYVAF), and 148-168 (FKVFGLTALTLINTVITVFYL).

This sequence belongs to the YciB family.

It is found in the cell inner membrane. Plays a role in cell envelope biogenesis, maintenance of cell envelope integrity and membrane homeostasis. The sequence is that of Inner membrane-spanning protein YciB from Shewanella sp. (strain ANA-3).